The following is a 69-amino-acid chain: Arabinogalactan protein 24 (69 aa).

An N-terminal signal peptide occupies residues methionine 1 to alanine 25. Proline 34, proline 36, proline 38, and proline 40 each carry 4-hydroxyproline. Proline 34, proline 36, proline 38, and proline 40 each carry an O-linked (Ara...) hydroxyproline glycan. Serine 42 carries GPI-anchor amidated serine lipidation. Positions serine 43–histidine 69 are cleaved as a propeptide — removed in mature form.

Belongs to the AG-peptide AGP family. In terms of processing, contains 4-hydroxyproline; hydroxylated on Pro-34, Pro-36, Pro-38 and Pro-40. Post-translationally, O-glycosylated on hydroxyprolines; noncontiguous hydroxylproline residues are glycosylated with arabinogalactan.

The protein resides in the cell membrane. Proteoglycan that seems to be implicated in diverse developmental roles such as differentiation, cell-cell recognition, embryogenesis and programmed cell death. This is Arabinogalactan protein 24 from Arabidopsis thaliana (Mouse-ear cress).